Reading from the N-terminus, the 325-residue chain is Biotin synthase (325 aa).

One can recognise a Radical SAM core domain in the interval 46 to 270 (NNSNNIDLCS…IAICKLILPN (225 aa)). 3 residues coordinate [4Fe-4S] cluster: cysteine 64, cysteine 68, and cysteine 71. Residues serine 107, cysteine 139, cysteine 198, and arginine 274 each coordinate [2Fe-2S] cluster.

Belongs to the radical SAM superfamily. Biotin synthase family. In terms of assembly, homodimer. [4Fe-4S] cluster is required as a cofactor. [2Fe-2S] cluster serves as cofactor.

The enzyme catalyses (4R,5S)-dethiobiotin + (sulfur carrier)-SH + 2 reduced [2Fe-2S]-[ferredoxin] + 2 S-adenosyl-L-methionine = (sulfur carrier)-H + biotin + 2 5'-deoxyadenosine + 2 L-methionine + 2 oxidized [2Fe-2S]-[ferredoxin]. It functions in the pathway cofactor biosynthesis; biotin biosynthesis; biotin from 7,8-diaminononanoate: step 2/2. Catalyzes the conversion of dethiobiotin (DTB) to biotin by the insertion of a sulfur atom into dethiobiotin via a radical-based mechanism. This Methanococcus aeolicus (strain ATCC BAA-1280 / DSM 17508 / OCM 812 / Nankai-3) protein is Biotin synthase.